The following is a 320-amino-acid chain: Malate dehydrogenase (320 aa).

NAD(+)-binding positions include 10–15 and Asp-34; that span reads GAGQIG. Positions 83 and 89 each coordinate substrate. Residues Asn-96 and 119-121 each bind NAD(+); that span reads ITN. Substrate-binding residues include Asn-121 and Arg-152. Residue His-176 is the Proton acceptor of the active site.

Belongs to the LDH/MDH superfamily. MDH type 3 family.

The catalysed reaction is (S)-malate + NAD(+) = oxaloacetate + NADH + H(+). Its function is as follows. Catalyzes the reversible oxidation of malate to oxaloacetate. This Beijerinckia indica subsp. indica (strain ATCC 9039 / DSM 1715 / NCIMB 8712) protein is Malate dehydrogenase.